We begin with the raw amino-acid sequence, 197 residues long: Xanthine phosphoribosyltransferase (197 aa).

Xanthine-binding residues include leucine 20 and threonine 27. 5-phospho-alpha-D-ribose 1-diphosphate is bound at residue 128-132; sequence ANGQA. Lysine 156 is a binding site for xanthine.

This sequence belongs to the purine/pyrimidine phosphoribosyltransferase family. Xpt subfamily. Homodimer.

It is found in the cytoplasm. It carries out the reaction XMP + diphosphate = xanthine + 5-phospho-alpha-D-ribose 1-diphosphate. The protein operates within purine metabolism; XMP biosynthesis via salvage pathway; XMP from xanthine: step 1/1. Functionally, converts the preformed base xanthine, a product of nucleic acid breakdown, to xanthosine 5'-monophosphate (XMP), so it can be reused for RNA or DNA synthesis. In Lactococcus lactis subsp. cremoris (strain SK11), this protein is Xanthine phosphoribosyltransferase.